The chain runs to 123 residues: ATP synthase epsilon chain (123 aa).

A disordered region spans residues E96–A123.

This sequence belongs to the ATPase epsilon chain family. As to quaternary structure, F-type ATPases have 2 components, CF(1) - the catalytic core - and CF(0) - the membrane proton channel. CF(1) has five subunits: alpha(3), beta(3), gamma(1), delta(1), epsilon(1). CF(0) has three main subunits: a, b and c.

It is found in the cell membrane. Produces ATP from ADP in the presence of a proton gradient across the membrane. The polypeptide is ATP synthase epsilon chain (Corynebacterium jeikeium (strain K411)).